Consider the following 447-residue polypeptide: Phosphoglucosamine mutase (447 aa).

The active-site Phosphoserine intermediate is S100. 4 residues coordinate Mg(2+): S100, D240, D242, and D244. The residue at position 100 (S100) is a Phosphoserine.

This sequence belongs to the phosphohexose mutase family. The cofactor is Mg(2+). In terms of processing, activated by phosphorylation.

The enzyme catalyses alpha-D-glucosamine 1-phosphate = D-glucosamine 6-phosphate. Catalyzes the conversion of glucosamine-6-phosphate to glucosamine-1-phosphate. This Anoxybacillus flavithermus (strain DSM 21510 / WK1) protein is Phosphoglucosamine mutase.